Here is a 1214-residue protein sequence, read N- to C-terminus: Filamin-A-interacting protein 1 (1214 aa).

Polar residues predominate over residues 1–15 (MRSRNQGGESSSNGH). The segment at 1-73 (MRSRNQGGES…ESEKKTKKPL (73 aa)) is disordered. Composition is skewed to basic and acidic residues over residues 32–47 (PSED…KGED) and 61–73 (PSGE…KKPL). S138 carries the phosphoserine modification. 2 coiled-coil regions span residues 192 to 581 (DYMN…KLRS) and 624 to 778 (PEDN…ELEL). 2 disordered regions span residues 875 to 898 (KREN…GHPG) and 949 to 976 (KPRI…GPER). S979 carries the post-translational modification Phosphoserine. Residues 1104–1192 (VSTGTVLRSP…TKFQPRAETQ (89 aa)) form a disordered region. The segment covering 1126 to 1140 (VTSTITITPVTTSST) has biased composition (low complexity). The span at 1141-1157 (RGTQSVSGQDGSSQRPT) shows a compositional bias: polar residues. The segment covering 1169–1180 (AGKPVVAAPGAG) has biased composition (low complexity).

It belongs to the FILIP1 family. Interacts with FLNA. Interacts with RHOD (in GTP-bound form).

It localises to the cytoplasm. Its subcellular location is the cytoskeleton. Its function is as follows. By acting through a filamin-A/F-actin axis, it controls the start of neocortical cell migration from the ventricular zone. May be able to induce the degradation of filamin-A. This chain is Filamin-A-interacting protein 1 (Filip1), found in Mus musculus (Mouse).